A 367-amino-acid chain; its full sequence is Peptide chain release factor 1 (367 aa).

Q238 bears the N5-methylglutamine mark.

The protein belongs to the prokaryotic/mitochondrial release factor family. Methylated by PrmC. Methylation increases the termination efficiency of RF1.

The protein localises to the cytoplasm. Functionally, peptide chain release factor 1 directs the termination of translation in response to the peptide chain termination codons UAG and UAA. The sequence is that of Peptide chain release factor 1 from Dictyoglomus turgidum (strain DSM 6724 / Z-1310).